We begin with the raw amino-acid sequence, 145 residues long: Transmembrane protein CCDC163 (145 aa).

The chain crosses the membrane as a helical span at residues 38–54 (LIGLCICFFCSSGCIFL).

Its subcellular location is the membrane. This Homo sapiens (Human) protein is Transmembrane protein CCDC163.